Consider the following 266-residue polypeptide: Enoyl-CoA hydratase EchA19 (266 aa).

Residue Glu-120 is part of the active site. Residue Lys-135 is modified to N6-succinyllysine. Glu-140 is a catalytic residue. The residue at position 142 (Lys-142) is an N6-succinyllysine.

Belongs to the enoyl-CoA hydratase/isomerase family. Homotrimer; substrate probably binds in elongated tunnels between the subunits. In terms of processing, succinylated in vitro at pH 8.1, succinylation reduces specific activity of the enzyme 5.5-fold; succinyl-CoA is a downstream by-product of cholesterol degradation. Can be de-succinylated in vitro by NAD-dependent protein deacylase (AC P9WGG3). Succinylation may be a negative feedback regulator of cholesterol metabolism.

It catalyses the reaction (22E)-3-oxochola-4,22-dien-24-oyl-CoA + H2O = (22R)-hydroxy-3-oxo-chol-4-ene-24-oyl-CoA. It functions in the pathway steroid metabolism; cholesterol degradation. Degradation of the cholesterol side chain involves 3 multistep beta-oxidation cycles, this may be involved in the second cycle. Hydrates 3-OCDO-CoA ((22E)-3-oxo-chol-4,22-dien-24-oyl-CoA) to make (22R)-HOCO-CoA (3-oxo-chol-4-ene-(22R)-hydroxy-24-oyl-CoA). Also acts on octenoyl-CoA. Not active on (E)-3-OCDS-CoA ((E)-3-oxocholest-4,24-dien-26-oyl-CoA) or 3-OPDC-CoA (3-oxo-4,17-pregnadiene-20-carboxyl-CoA). Hydrates the same substrate as ChsH3, but the 2 enzymes make different stereoisomers of the product. This Mycobacterium tuberculosis (strain ATCC 25618 / H37Rv) protein is Enoyl-CoA hydratase EchA19.